A 391-amino-acid polypeptide reads, in one-letter code: Terminal nucleotidyltransferase 5C (391 aa).

Belongs to the TENT family. Interacts with BCCIP and PABPC1; the interaction has no effect on TENT5C poly(A) polymerase function. Interacts with PLK4; this interaction leads to the TENT5C recruitment into the centrosome. In terms of tissue distribution, expressed by splenocytes, expression is increased in activated splenocytes.

The protein localises to the nucleus. The protein resides in the cytoplasm. Its subcellular location is the cytoskeleton. It localises to the microtubule organizing center. It is found in the centrosome. The catalysed reaction is RNA(n) + ATP = RNA(n)-3'-adenine ribonucleotide + diphosphate. Catalyzes the transfer of one adenosine molecule from an ATP to an mRNA poly(A) tail bearing a 3'-OH terminal group and enhances mRNA stability and gene expression. Can also elongate RNA oligos ending with uridine molecule, provided that the sequence is adenosine-rich. Mainly targets mRNAs encoding endoplasmic reticulum-targeted protein. This is Terminal nucleotidyltransferase 5C from Mus musculus (Mouse).